The chain runs to 356 residues: C-X-C chemokine receptor type 2 (356 aa).

Residues 1-46 (MEYINWDNYSLEDLFGDIDNYTYNTEMPIIPADSAPCRPESLDINK) are Extracellular-facing. N-linked (GlcNAc...) asparagine glycans are attached at residues asparagine 8 and asparagine 20. Residues 47–73 (YAVVVIYVLVFVLNLLGNSLVIMVVLY) traverse the membrane as a helical segment. Topologically, residues 74-82 (SRVSHSVTD) are cytoplasmic. The helical transmembrane segment at 83–103 (VYLLNLAIADLLFALTLPIWA) threads the bilayer. Residues 104–118 (VSKVKGWIFGTPLCK) lie on the Extracellular side of the membrane. Cysteine 117 and cysteine 194 form a disulfide bridge. Residues 119–140 (IVSLLKEVNFYSGILLLASISM) form a helical membrane-spanning segment. The Cytoplasmic portion of the chain corresponds to 141 to 161 (DRYLAIVHATRRLTQKKHWVK). Residues 162 to 181 (FICLGIWALSLILSLPIFVF) traverse the membrane as a helical segment. Topologically, residues 182–206 (RRAINPPYSSPVCYEDMGTNTTKLR) are extracellular. Residues 207–229 (IVMRALPQTFGFIVPLMIMLFCY) traverse the membrane as a helical segment. At 230 to 249 (GLTLRTLFEAHMGQKHRAMR) the chain is on the cytoplasmic side. The helical transmembrane segment at 250-269 (VIFAVVLVFLLCWLPYNLVA) threads the bilayer. The Extracellular segment spans residues 270–290 (DTLMRLQAIEETCQRRNDIGR). The helical transmembrane segment at 291–311 (ALDATEILGFFHSCLNPLIYA) threads the bilayer. Topologically, residues 312-356 (FIGQKFRHGLLKIMAFHGLISKEYLPKDSRPSFVGSSSANTSTTF) are cytoplasmic.

This sequence belongs to the G-protein coupled receptor 1 family. Interacts with IL8. Interacts with GNAI2. In terms of processing, phosphorylated upon ligand binding; which is required for desensitization.

Its subcellular location is the cell membrane. Its function is as follows. Receptor for interleukin-8 which is a powerful neutrophil chemotactic factor. Binding of IL-8 to the receptor causes activation of neutrophils. This response is mediated via a G-protein that activates a phosphatidylinositol-calcium second messenger system. Binds to IL-8 with high affinity. Also binds with high affinity to CXCL3, GRO/MGSA and NAP-2. This chain is C-X-C chemokine receptor type 2 (CXCR2), found in Canis lupus familiaris (Dog).